The sequence spans 655 residues: UvrABC system protein C (655 aa).

The GIY-YIG domain occupies 16 to 95 (TDPGVYRFRD…IKEFAPRYNL (80 aa)). Positions 207-242 (KRFIGTLEKQMAEAVAELDYERAARLRDDVIALRKV) constitute a UVR domain.

Belongs to the UvrC family. Interacts with UvrB in an incision complex.

It localises to the cytoplasm. Its function is as follows. The UvrABC repair system catalyzes the recognition and processing of DNA lesions. UvrC both incises the 5' and 3' sides of the lesion. The N-terminal half is responsible for the 3' incision and the C-terminal half is responsible for the 5' incision. In Renibacterium salmoninarum (strain ATCC 33209 / DSM 20767 / JCM 11484 / NBRC 15589 / NCIMB 2235), this protein is UvrABC system protein C.